The primary structure comprises 228 residues: MGQKVHPIGIRLGIVKEHTSVWYADGRTYADYLFADLKVREYLQDKLKSASVSRIDIHRPAQTARITIHTARPGIVIGKKGEDVEKLRQDLTKQMGVPVHINIEEIRKPELDGMLVAQSVAQQLERRVMFRRAMKRAVQNAMRIGAKGIKIQVSGRLGGAEIARTEWYREGRVPLHTLRADIDYANYEAHTTYGVIGVKVWIFKGEVIGGRQEELKPQAPAPRKKAAK.

The KH type-2 domain maps to 39-107 (VREYLQDKLK…PVHINIEEIR (69 aa)).

This sequence belongs to the universal ribosomal protein uS3 family. Part of the 30S ribosomal subunit. Forms a tight complex with proteins S10 and S14.

Functionally, binds the lower part of the 30S subunit head. Binds mRNA in the 70S ribosome, positioning it for translation. The polypeptide is Small ribosomal subunit protein uS3 (Pseudomonas syringae pv. syringae (strain B728a)).